The chain runs to 677 residues: Methionine--tRNA ligase (677 aa).

The 'HIGH' region signature appears at 15 to 25; that stretch reads PYANGPIHIGH. Zn(2+) contacts are provided by C146, C149, C159, and C162. The 'KMSKS' region signature appears at 332–336; sequence KMSKS. An ATP-binding site is contributed by K335. One can recognise a tRNA-binding domain in the interval 576–677; sequence DFAKVDLRVA…DGAKPGMRIM (102 aa).

It belongs to the class-I aminoacyl-tRNA synthetase family. MetG type 1 subfamily. Homodimer. Zn(2+) is required as a cofactor.

The protein resides in the cytoplasm. It catalyses the reaction tRNA(Met) + L-methionine + ATP = L-methionyl-tRNA(Met) + AMP + diphosphate. Is required not only for elongation of protein synthesis but also for the initiation of all mRNA translation through initiator tRNA(fMet) aminoacylation. This chain is Methionine--tRNA ligase, found in Idiomarina loihiensis (strain ATCC BAA-735 / DSM 15497 / L2-TR).